The following is a 320-amino-acid chain: Bifunctional ligase/repressor BirA (320 aa).

A DNA-binding region (H-T-H motif) is located at residues 22–41 (GEQLGERLGMSRAAINKHIQ). The BPL/LPL catalytic domain maps to 66-254 (LLDADRIHSQ…KLRAALELFE (189 aa)). Residues 89–91 (STN), Gln112, 116–118 (RGR), and Lys183 each bind biotin.

The protein belongs to the biotin--protein ligase family.

It catalyses the reaction biotin + L-lysyl-[protein] + ATP = N(6)-biotinyl-L-lysyl-[protein] + AMP + diphosphate + H(+). Its function is as follows. Acts both as a biotin--[acetyl-CoA-carboxylase] ligase and a biotin-operon repressor. In the presence of ATP, BirA activates biotin to form the BirA-biotinyl-5'-adenylate (BirA-bio-5'-AMP or holoBirA) complex. HoloBirA can either transfer the biotinyl moiety to the biotin carboxyl carrier protein (BCCP) subunit of acetyl-CoA carboxylase, or bind to the biotin operator site and inhibit transcription of the operon. The chain is Bifunctional ligase/repressor BirA from Salmonella typhimurium (strain LT2 / SGSC1412 / ATCC 700720).